The chain runs to 1512 residues: Bifunctional glutamate/proline--tRNA ligase (1512 aa).

Residues 164–759 (GTKWDVSGNR…SSVLYSRVAV (596 aa)) are glutamate--tRNA ligase. The 'HIGH' region motif lies at 204 to 214 (PEASGYLHIGH). Residues 294-315 (TPAEQMKAEREQRTESKHRKNS) form a disordered region. Over residues 299–308 (MKAEREQRTE) the composition is skewed to basic and acidic residues. N6-acetyllysine; alternate is present on K300. K300 is modified (N6-malonyllysine; alternate). T355 carries the phosphothreonine modification. The residue at position 417 (K417) is an N6-acetyllysine. Residues 432 to 436 (VLSKR) carry the 'KMSKS' region motif. S434 bears the Phosphoserine mark. N6-acetyllysine occurs at positions 498, 535, 542, and 637. Over residues 709–736 (EMPTSGSKEKTKVEISKKETSSAPKERP) the composition is skewed to basic and acidic residues. Residues 709-742 (EMPTSGSKEKTKVEISKKETSSAPKERPAPAVSS) are disordered. One can recognise a WHEP-TRS 1 domain in the interval 749–805 (DSSVLYSRVAVQGDVVRELKAKKAPKEDIDAAVKQLLTLKAEYKEKTGQEYKPGNPS). The segment at 760-956 (QGDVVRELKA…GIEYKPVSAT (197 aa)) is 3 X 57 AA approximate repeats. K788 carries the N6-acetyllysine modification. Residues 795–819 (TGQEYKPGNPSAAAVQTVSTKSSSN) form a disordered region. Polar residues predominate over residues 808-819 (AVQTVSTKSSSN). The 57-residue stretch at 822–878 (ESTSLYNKVAAQGEVVRKLKAEKAPKAKVTEAVECLLSLKAEYKEKTGKDYVPGQPP) folds into the WHEP-TRS 2 domain. K861 bears the N6-acetyllysine mark. Disordered regions lie at residues 869 to 898 (GKDY…GAEK) and 956 to 1011 (TGAE…PKKQ). Residue Y872 is modified to Phosphotyrosine. Polar residues predominate over residues 878-892 (PASQNSHSNPVSNAQ). S885 is modified (phosphoserine). Positions 900 to 956 (EAKVLFDRVACQGEVVRKLKAEKASKDQVDSAVQELLQLKAQYKSLTGIEYKPVSAT) constitute a WHEP-TRS 3 domain. Over residues 958–976 (AEDKDKKKKEKENKSEKQN) the composition is skewed to basic and acidic residues. A compositionally biased stretch (gly residues) spans 997 to 1006 (LSSGGAGEGQ). Phosphoserine is present on S998. At S999 the chain carries Phosphoserine; by RPS6KB1. A proline--tRNA ligase region spans residues 1007–1512 (GPKKQTRLGL…KFYTLFGRSY (506 aa)). L-proline-binding positions include 1121–1123 (TSE) and R1152. ATP contacts are provided by R1152, E1154, R1163, T1164, Q1237, and T1240. Residue R1152 is modified to Omega-N-methylarginine. Residue Q1237 participates in Mg(2+) binding. H1242 is a binding site for L-proline. ATP-binding residues include T1276 and R1278. Residue S1350 is modified to Phosphoserine. Zn(2+) contacts are provided by C1448, C1453, C1495, and C1497. Residue K1503 is modified to N6-acetyllysine.

In the N-terminal section; belongs to the class-I aminoacyl-tRNA synthetase family. Glutamate--tRNA ligase type 2 subfamily. It in the C-terminal section; belongs to the class-II aminoacyl-tRNA synthetase family. Homodimer. Part of the aminoacyl-tRNA synthetase multienzyme complex, also know as multisynthetase complex, that is composed of the tRNA ligases for Arg (RARS1), Asp (DARS1), Gln (QARS1), Ile (IARS1), Leu (LARS1), Lys (KARS1), Met (MARS1) the bifunctional ligase for Glu and Pro (EPRS1) and the auxiliary subunits AIMP1/p43, AIMP2/p38 and EEF1E1/p18. Forms a linear complex that contains MARS1, EEF1E1, EPRS1 and AIMP2 that is at the core of the multisubunit complex. Interacts with TARS3. Interacts with DUS2L. Component of the GAIT complex which is composed of EPRS1, RPL13A and GAPDH. Interacts (phosphorylated at Ser-999) with SLC27A1; mediates the translocation of SLC27A1 from the cytoplasm to the plasma membrane thereby increasing the uptake of long-chain fatty acids. In terms of processing, phosphorylated at Ser-999 by RPS6KB1; triggers EPRS1 release from the aminoacyl-tRNA synthetase multienzyme complex. In monocytes, the IFN-gamma-induced phosphorylation at Ser-999 releases EPRS1 from the aminoacyl-tRNA synthetase multienzyme complex, allowing its association with the GAIT complex. Phosphorylation at Ser-999 is specifically required for the RPL13A-mediated interaction of the GAIT complex with eIF4G. Phosphorylation at Ser-999 by RPS6KB1, is also induced by insulin through activation of the mTORC1 signaling pathway and promotes the interaction of EPRS1 with SLC27A1.

The protein localises to the cytoplasm. Its subcellular location is the cytosol. It localises to the membrane. The enzyme catalyses tRNA(Glu) + L-glutamate + ATP = L-glutamyl-tRNA(Glu) + AMP + diphosphate. The catalysed reaction is tRNA(Pro) + L-proline + ATP = L-prolyl-tRNA(Pro) + AMP + diphosphate. Functionally, multifunctional protein which primarily functions within the aminoacyl-tRNA synthetase multienzyme complex, also known as multisynthetase complex. Within the complex it catalyzes the attachment of both L-glutamate and L-proline to their cognate tRNAs in a two-step reaction where the amino acid is first activated by ATP to form a covalent intermediate with AMP. Subsequently, the activated amino acid is transferred to the acceptor end of the cognate tRNA to form L-glutamyl-tRNA(Glu) and L-prolyl-tRNA(Pro). Upon interferon-gamma stimulation, EPRS1 undergoes phosphorylation, causing its dissociation from the aminoacyl-tRNA synthetase multienzyme complex. It is recruited to form the GAIT complex, which binds to stem loop-containing GAIT elements found in the 3'-UTR of various inflammatory mRNAs, such as ceruloplasmin. The GAIT complex inhibits the translation of these mRNAs, allowing interferon-gamma to redirect the function of EPRS1 from protein synthesis to translation inhibition in specific cell contexts. Furthermore, it can function as a downstream effector in the mTORC1 signaling pathway, by promoting the translocation of SLC27A1 from the cytoplasm to the plasma membrane where it mediates the uptake of long-chain fatty acid by adipocytes. Thereby, EPRS1 also plays a role in fat metabolism and more indirectly influences lifespan. In Mus musculus (Mouse), this protein is Bifunctional glutamate/proline--tRNA ligase.